The chain runs to 154 residues: Small ribosomal subunit protein uS11c (154 aa).

The protein belongs to the universal ribosomal protein uS11 family. Part of the 30S ribosomal subunit.

Its subcellular location is the plastid. The sequence is that of Small ribosomal subunit protein uS11c from Helicosporidium sp. subsp. Simulium jonesii (Green alga).